The following is a 174-amino-acid chain: Endoribonuclease YbeY (174 aa).

H129, H133, and H139 together coordinate Zn(2+).

The protein belongs to the endoribonuclease YbeY family. Zn(2+) serves as cofactor.

The protein resides in the cytoplasm. In terms of biological role, single strand-specific metallo-endoribonuclease involved in late-stage 70S ribosome quality control and in maturation of the 3' terminus of the 16S rRNA. The chain is Endoribonuclease YbeY from Lactobacillus delbrueckii subsp. bulgaricus (strain ATCC BAA-365 / Lb-18).